Here is a 248-residue protein sequence, read N- to C-terminus: Probable transcriptional regulatory protein Acel_1346 (248 aa).

This sequence belongs to the TACO1 family.

It localises to the cytoplasm. This is Probable transcriptional regulatory protein Acel_1346 from Acidothermus cellulolyticus (strain ATCC 43068 / DSM 8971 / 11B).